The following is a 345-amino-acid chain: Linoleate 10R-lipoxygenase COP4 (345 aa).

Residues D87, D91, N222, S226, and E230 each coordinate Mg(2+). The DDXXD motif signature appears at 87–91 (DEISD).

This sequence belongs to the terpene synthase family. Requires Mg(2+) as cofactor.

It carries out the reaction (2E,6E)-farnesyl diphosphate + H2O = cubebol + diphosphate. It catalyses the reaction (2E,6E)-farnesyl diphosphate = beta-copaene + diphosphate. The enzyme catalyses (2E,6E)-farnesyl diphosphate = beta-cubebene + diphosphate. The catalysed reaction is (2E,6E)-farnesyl diphosphate = (+)-sativene + diphosphate. Functionally, sesquiterpene synthase that catalyzes the cyclization of farnesyl diphosphate (FPP) into multiple products, including germacrene D, beta-copaene, beta-cubebene, (+)-sativene and cubebol, a natural sesquiterpene alcohol used in the food industry for its cooling and refreshing taste. Terpenoid hydrocarbons resulting from cyclization of farnesyl diphosphate are intermediates in the biosynthesis of biologically active compounds such as antibiotics, toxins and pheromones. The sequence is that of Linoleate 10R-lipoxygenase COP4 (COP4) from Coprinopsis cinerea (strain Okayama-7 / 130 / ATCC MYA-4618 / FGSC 9003) (Inky cap fungus).